A 384-amino-acid polypeptide reads, in one-letter code: MLASYASDPLKSRGRLYKEIPTSYRNEFERDRDRIIHTNAFRRLQYKTQVFINHEGDHYRNRLTHSLEVSTVARSVASTLNLSNDLAETIALAHDLGHTPFGHAGERALNECMREYNGFSHNAQSLKILTLLEKRYAAYNGVNLTWEVLEGIVKHNGPILGEINEYIAEYNKQNDLELSTYASAEAQIAALADDISYISHDLEDSIGAKIIDFHSLAELKYIDQHVVELKSKFKNISSSCLIYEVVRKLIHELITDLLWQTKENLNKEKITNIDEIRNLNYQIVDFTEKTNKNIKETKKFLHERVYKSNKITAISLKCTKIVQGLFKVYMDDINLLPVNWKMLIDSNETYSKARVVADYIAGMTDRFAIQEYNQLCSTSYITCF.

The HD domain occupies 62-198; sequence RLTHSLEVST…AALADDISYI (137 aa).

The protein belongs to the dGTPase family. Type 2 subfamily.

In Rickettsia conorii (strain ATCC VR-613 / Malish 7), this protein is Deoxyguanosinetriphosphate triphosphohydrolase-like protein.